A 165-amino-acid chain; its full sequence is Nucleotide-binding protein PMM0481 (165 aa).

The protein belongs to the YajQ family.

Its function is as follows. Nucleotide-binding protein. The protein is Nucleotide-binding protein PMM0481 of Prochlorococcus marinus subsp. pastoris (strain CCMP1986 / NIES-2087 / MED4).